An 85-amino-acid chain; its full sequence is Large ribosomal subunit protein bL27 (85 aa).

The interval 1–21 is disordered; sequence MAHKKGLGSTKNGRDSQAKRL.

It belongs to the bacterial ribosomal protein bL27 family.

This chain is Large ribosomal subunit protein bL27, found in Thermus thermophilus (strain ATCC BAA-163 / DSM 7039 / HB27).